The chain runs to 251 residues: tRNA (guanine-N(7)-)-methyltransferase (251 aa).

Residues E69, E94, D121, and D143 each contribute to the S-adenosyl-L-methionine site. Residue D143 is part of the active site. Substrate-binding residues include K147 and D179.

This sequence belongs to the class I-like SAM-binding methyltransferase superfamily. TrmB family.

It catalyses the reaction guanosine(46) in tRNA + S-adenosyl-L-methionine = N(7)-methylguanosine(46) in tRNA + S-adenosyl-L-homocysteine. The protein operates within tRNA modification; N(7)-methylguanine-tRNA biosynthesis. Its function is as follows. Catalyzes the formation of N(7)-methylguanine at position 46 (m7G46) in tRNA. In Rhodopseudomonas palustris (strain BisB18), this protein is tRNA (guanine-N(7)-)-methyltransferase.